The chain runs to 38 residues: Conotoxin FVIA (38 aa).

A propeptide spanning residues 1–12 (ILSLSLLDRSTR) is cleaved from the precursor. Cystine bridges form between C13/C28, C20/C32, and C27/C37. A Cysteine amide modification is found at C37.

Belongs to the conotoxin O1 superfamily. Expressed by the venom duct.

It localises to the secreted. In terms of biological role, omega-conotoxins act at presynaptic membranes, they bind and block voltage-gated calcium channels (Cav). This peptide reversibly and selectively inhibits Cav2.2/CACNA1B (IC(50)=11.5 nM) voltage-gated calcium channels. Channel time recovery after toxin exposure is short (about 50 seconds). In vivo, it effectively and dose-dependently reduces nociceptive behavior in the formalin test and in neuropathic pain models, and reduces mechanical and thermal allodynia in the tail nerve injury rat model. It also shows significant analgesic effects on writhing in mouse neurotransmitter- and cytokine-induced pain models, though it has no effect on acute thermal pain and interferon-gamma-induced pain. It also depresses blood pressure immediately after administration, but pressure recovers relatively quickly and completely. In Conus fulmen (Thunderbolt cone), this protein is Conotoxin FVIA.